The following is an 873-amino-acid chain: Sister chromatid cohesion protein PDS5 homolog C (873 aa).

HEAT repeat units lie at residues 53 to 92, 99 to 136, 149 to 187, and 189 to 227; these read NALTPLMKGLVGGKLFKHSDVDVKVAVAACISEITRITAP, DQMKEVFKLIVSSFEDLVDKSSRSYAKRISILETVAKV, ALLIEMFQHFLKAIRDHHSGNVFSSMENIMTLVLEESED, and PSEMLSPILHSVKKDDEISQVSRRLAEQVLSNCASKLKT. A compositionally biased stretch (basic and acidic residues) spans 266–301; that stretch reads NEKEDSQGHIKRETEVEKAAEISTPERTDAPKDESG. 2 disordered regions span residues 266-611 and 658-873; these read NEKE…LVGS and SPLD…KRKR. Residue T289 is modified to Phosphothreonine. Positions 303 to 319 are enriched in polar residues; the sequence is SGVSNGVAQQNDSSVDT. A compositionally biased stretch (basic and acidic residues) spans 320–334; it reads DSMKKQDDTGAKDEP. Polar residues predominate over residues 336–348; it reads QLDNPRNTDLNNT. Basic and acidic residues-rich tracts occupy residues 349–365 and 373–394; these read TEEKPDVEHQIEEKENE and DLSKDSDIKEETEPAELLDSKD. Composition is skewed to polar residues over residues 400–411 and 418–438; these read PVDSSVTAATSS and SVQILPSKTSGDETANVSSPS. The segment covering 456–466 has biased composition (basic and acidic residues); the sequence is KKKESSTEEVK. A compositionally biased stretch (low complexity) spans 494–510; it reads KVASSSKTKPTVPPSKK. Basic and acidic residues-rich tracts occupy residues 511–526 and 535–555; these read STSETKVAKQSEKKVV and TKPKEEKKKPGRGKAIDEESL. The segment covering 661-681 has biased composition (acidic residues); sequence DESELSQDEEAADQTGQEEDA. The segment covering 701–725 has biased composition (low complexity); it reads SSAKKGSGAGSSKAKATPASKSSKT. Residues 726–746 show a composition bias toward basic and acidic residues; that stretch reads SQDDKTASKSKDSKEASREEE. Residues 747 to 757 show a composition bias toward acidic residues; the sequence is ASSEEESEEEE. Composition is skewed to low complexity over residues 795-814 and 822-831; these read KATTSSKSKSGPVKSVPAKS and KSGSASTPAS. The span at 844–853 shows a compositional bias: basic and acidic residues; it reads ETPKEPEPAT. The span at 854-866 shows a compositional bias: low complexity; sequence KAKSGKSQGSQSK.

It belongs to the PDS5 family. Interacts with the cohesin complex.

It localises to the nucleus. Its function is as follows. Cohesin cofactor dispensable during the meiotic division but playing an important role in DNA repair by homologous recombination (HR) probably by helping SMC5/SMC6 complex. Regulator of sister chromatid cohesion in mitosis which may stabilize cohesin complex association with chromatin. May couple sister chromatid cohesion during mitosis to DNA replication. Cohesion ensures that chromosome partitioning is accurate in both meiotic and mitotic cells and plays an important role in DNA repair. This chain is Sister chromatid cohesion protein PDS5 homolog C, found in Arabidopsis thaliana (Mouse-ear cress).